The sequence spans 366 residues: Alanine racemase (366 aa).

Lys40 serves as the catalytic Proton acceptor; specific for D-alanine. Lys40 bears the N6-(pyridoxal phosphate)lysine mark. Arg136 provides a ligand contact to substrate. Tyr263 acts as the Proton acceptor; specific for L-alanine in catalysis. Met310 is a substrate binding site.

Belongs to the alanine racemase family. Requires pyridoxal 5'-phosphate as cofactor.

The catalysed reaction is L-alanine = D-alanine. It participates in amino-acid biosynthesis; D-alanine biosynthesis; D-alanine from L-alanine: step 1/1. In terms of biological role, catalyzes the interconversion of L-alanine and D-alanine. May also act on other amino acids. The protein is Alanine racemase (alr) of Streptococcus pyogenes serotype M5 (strain Manfredo).